The following is a 179-amino-acid chain: Large ribosomal subunit protein uL5 (179 aa).

As to quaternary structure, contacts the P site tRNA. Forms a bridge to the 30S subunit in the 70S ribosome. Part of the 50S ribosomal subunit. Part of the 5S rRNA/L5/L18 subcomplex; in this organism only 2 proteins, L5 and L18 have been shown to be part of the 5S rRNA subcomplex, unlike E.coli and T.thermophilus where L25 (TL5) is also found. Has been shown to bind 5S rRNA.

In terms of biological role, this is one of the proteins that bind and probably mediate the attachment of the 5S RNA into the large ribosomal subunit, where it forms part of the central protuberance. In the 70S ribosome it contacts protein S13 of the 30S subunit (bridge B1b), connecting the 2 subunits; this bridge is implicated in subunit movement. Contacts the P site tRNA; the 5S rRNA and some of its associated proteins might help stabilize positioning of ribosome-bound tRNAs. This is Large ribosomal subunit protein uL5 (rplE) from Geobacillus stearothermophilus (Bacillus stearothermophilus).